A 183-amino-acid chain; its full sequence is Small ribosomal subunit protein uS4 (183 aa).

The S4 RNA-binding domain maps to 106–168 (RRLETLVYKK…ETSPFTDENH (63 aa)). The disordered stretch occupies residues 158-183 (NETSPFTDENHPLRMEMSGTKEEENE). Residues 165 to 183 (DENHPLRMEMSGTKEEENE) show a composition bias toward basic and acidic residues.

It belongs to the universal ribosomal protein uS4 family. In terms of assembly, part of the 30S ribosomal subunit. Contacts protein S5. The interaction surface between S4 and S5 is involved in control of translational fidelity.

One of the primary rRNA binding proteins, it binds directly to 16S rRNA where it nucleates assembly of the body of the 30S subunit. Its function is as follows. With S5 and S12 plays an important role in translational accuracy. This chain is Small ribosomal subunit protein uS4, found in Picrophilus torridus (strain ATCC 700027 / DSM 9790 / JCM 10055 / NBRC 100828 / KAW 2/3).